We begin with the raw amino-acid sequence, 1002 residues long: Transposase for transposon gamma-delta (1002 aa).

The protein belongs to the transposase 7 family.

Its function is as follows. Required for transposition of transposon Tn1000. The sequence is that of Transposase for transposon gamma-delta (tnpA) from Escherichia coli (strain K12).